The sequence spans 250 residues: S-adenosyl-L-methionine-dependent 2-deoxy-scyllo-inosamine dehydrogenase (250 aa).

[4Fe-4S] cluster is bound by residues Cys-16, Cys-20, Cys-23, Cys-169, Cys-187, and Glu-223.

This sequence belongs to the radical SAM superfamily. [4Fe-4S] cluster is required as a cofactor.

The enzyme catalyses 2-deoxy-scyllo-inosamine + S-adenosyl-L-methionine = 3-amino-2,3-dideoxy-scyllo-inosose + 5'-deoxyadenosine + L-methionine + H(+). It participates in antibiotic biosynthesis; butirosin biosynthesis. Functionally, catalyzes the radical S-adenosyl-L-methionine (SAM)-dependent two-electron oxidation of 2-deoxy-scyllo-inosamine (DOIA) to amino-dideoxy-scyllo-inosose (amino-DOI) in the biosynthetic pathway of butirosin. The sequence is that of S-adenosyl-L-methionine-dependent 2-deoxy-scyllo-inosamine dehydrogenase (btrN) from Niallia circulans (Bacillus circulans).